The following is a 224-amino-acid chain: Urease accessory protein UreF (224 aa).

The protein belongs to the UreF family. As to quaternary structure, ureD, UreF and UreG form a complex that acts as a GTP-hydrolysis-dependent molecular chaperone, activating the urease apoprotein by helping to assemble the nickel containing metallocenter of UreC. The UreE protein probably delivers the nickel.

Its subcellular location is the cytoplasm. Its function is as follows. Required for maturation of urease via the functional incorporation of the urease nickel metallocenter. This Citrobacter koseri (strain ATCC BAA-895 / CDC 4225-83 / SGSC4696) protein is Urease accessory protein UreF.